The primary structure comprises 296 residues: Ribosomal RNA small subunit methyltransferase A (296 aa).

S-adenosyl-L-methionine-binding residues include Asn32, Leu34, Gly59, Glu80, Asp105, and Asn130.

It belongs to the class I-like SAM-binding methyltransferase superfamily. rRNA adenine N(6)-methyltransferase family. RsmA subfamily.

The protein localises to the cytoplasm. The catalysed reaction is adenosine(1518)/adenosine(1519) in 16S rRNA + 4 S-adenosyl-L-methionine = N(6)-dimethyladenosine(1518)/N(6)-dimethyladenosine(1519) in 16S rRNA + 4 S-adenosyl-L-homocysteine + 4 H(+). Specifically dimethylates two adjacent adenosines (A1518 and A1519) in the loop of a conserved hairpin near the 3'-end of 16S rRNA in the 30S particle. May play a critical role in biogenesis of 30S subunits. The protein is Ribosomal RNA small subunit methyltransferase A of Lactiplantibacillus plantarum (strain ATCC BAA-793 / NCIMB 8826 / WCFS1) (Lactobacillus plantarum).